The chain runs to 1496 residues: DNA-directed RNA polymerase subunit beta' (1496 aa).

Positions 67, 69, 82, and 85 each coordinate Zn(2+). The Mg(2+) site is built by aspartate 499, aspartate 501, and aspartate 503. Zn(2+) contacts are provided by cysteine 867, cysteine 943, cysteine 950, and cysteine 953.

This sequence belongs to the RNA polymerase beta' chain family. The RNAP catalytic core consists of 2 alpha, 1 beta, 1 beta' and 1 omega subunit. When a sigma factor is associated with the core the holoenzyme is formed, which can initiate transcription. Requires Mg(2+) as cofactor. The cofactor is Zn(2+).

It catalyses the reaction RNA(n) + a ribonucleoside 5'-triphosphate = RNA(n+1) + diphosphate. In terms of biological role, DNA-dependent RNA polymerase catalyzes the transcription of DNA into RNA using the four ribonucleoside triphosphates as substrates. The polypeptide is DNA-directed RNA polymerase subunit beta' (Chlorobium limicola (strain DSM 245 / NBRC 103803 / 6330)).